A 491-amino-acid polypeptide reads, in one-letter code: Nucleotidyltransferase MB21D2 (491 aa).

The segment covering 431–442 has biased composition (polar residues); it reads RGSTTSIPSPQS. A disordered region spans residues 431–452; that stretch reads RGSTTSIPSPQSDGGDPNQPDD. T435 is subject to Phosphothreonine. Phosphoserine is present on residues S436, S439, and S442.

The protein belongs to the mab-21 family.

Probable nucleotidyltransferase that catalyzes the formation of cyclic dinucleotide second messenger in response to some unknown stimulus. In Homo sapiens (Human), this protein is Nucleotidyltransferase MB21D2.